The chain runs to 293 residues: Ribonuclease HII (293 aa).

Residues 81-271 (THIAGVDEAG…VREALGLPTG (191 aa)) form the RNase H type-2 domain. A divalent metal cation is bound by residues Asp-87, Glu-88, and Asp-180. Positions 273-293 (PPSALQAELFPEAPSRTGVKS) are disordered.

The protein belongs to the RNase HII family. Mn(2+) is required as a cofactor. Requires Mg(2+) as cofactor.

Its subcellular location is the cytoplasm. It catalyses the reaction Endonucleolytic cleavage to 5'-phosphomonoester.. Functionally, endonuclease that specifically degrades the RNA of RNA-DNA hybrids. The sequence is that of Ribonuclease HII from Myxococcus xanthus (strain DK1622).